Consider the following 194-residue polypeptide: Probable transcription factor At4g00130 (194 aa).

This sequence belongs to the GeBP family.

The protein is Probable transcription factor At4g00130 of Arabidopsis thaliana (Mouse-ear cress).